The chain runs to 407 residues: Arginine deiminase (407 aa).

Cys397 acts as the Amidino-cysteine intermediate in catalysis.

This sequence belongs to the arginine deiminase family.

It localises to the cytoplasm. The enzyme catalyses L-arginine + H2O = L-citrulline + NH4(+). It functions in the pathway amino-acid degradation; L-arginine degradation via ADI pathway; carbamoyl phosphate from L-arginine: step 1/2. The chain is Arginine deiminase from Vibrio cholerae serotype O1 (strain ATCC 39541 / Classical Ogawa 395 / O395).